Here is a 122-residue protein sequence, read N- to C-terminus: Basic phospholipase A2 PLA-B (122 aa).

Intrachain disulfides connect cysteine 26–cysteine 115, cysteine 28–cysteine 44, cysteine 43–cysteine 95, cysteine 49–cysteine 122, cysteine 50–cysteine 88, cysteine 57–cysteine 81, and cysteine 75–cysteine 86. Ca(2+) contacts are provided by tyrosine 27, glycine 29, and glycine 31. Histidine 47 is an active-site residue. Aspartate 48 serves as a coordination point for Ca(2+). Aspartate 89 is an active-site residue.

This sequence belongs to the phospholipase A2 family. Group II subfamily. D49 sub-subfamily. It depends on Ca(2+) as a cofactor. As to expression, expressed by the venom gland.

It is found in the secreted. The enzyme catalyses a 1,2-diacyl-sn-glycero-3-phosphocholine + H2O = a 1-acyl-sn-glycero-3-phosphocholine + a fatty acid + H(+). Snake venom phospholipase A2 (PLA2) that displays edema-inducing activities. PLA-B is three times more active than PLA-A in edema-inducing activities. PLA2 catalyzes the calcium-dependent hydrolysis of the 2-acyl groups in 3-sn-phosphoglycerides. This Protobothrops flavoviridis (Habu) protein is Basic phospholipase A2 PLA-B.